The sequence spans 334 residues: Protein-methionine-sulfoxide reductase catalytic subunit MsrP (334 aa).

The segment at residues 1 to 44 is a signal peptide (tat-type signal); sequence MKKNQFLKESDVTAESVFFMKRRQVLKALGISAAAFSLPHAAHA. Mo-molybdopterin is bound by residues N88, 91-92, C146, T181, N233, R238, and 249-251; these read YE and GIK.

It belongs to the MsrP family. As to quaternary structure, heterodimer of a catalytic subunit (MsrP) and a heme-binding subunit (MsrQ). It depends on Mo-molybdopterin as a cofactor. In terms of processing, predicted to be exported by the Tat system. The position of the signal peptide cleavage has not been experimentally proven.

The protein resides in the periplasm. It carries out the reaction L-methionyl-[protein] + a quinone + H2O = L-methionyl-(S)-S-oxide-[protein] + a quinol. It catalyses the reaction L-methionyl-[protein] + a quinone + H2O = L-methionyl-(R)-S-oxide-[protein] + a quinol. In terms of biological role, part of the MsrPQ system that repairs oxidized periplasmic proteins containing methionine sulfoxide residues (Met-O), using respiratory chain electrons. Thus protects these proteins from oxidative-stress damage caused by reactive species of oxygen and chlorine generated by the host defense mechanisms. MsrPQ is essential for the maintenance of envelope integrity under bleach stress, rescuing a wide series of structurally unrelated periplasmic proteins from methionine oxidation, including the primary periplasmic chaperone SurA and the lipoprotein Pal. The catalytic subunit MsrP is non-stereospecific, being able to reduce both (R-) and (S-) diastereoisomers of methionine sulfoxide. This chain is Protein-methionine-sulfoxide reductase catalytic subunit MsrP, found in Escherichia coli O6:H1 (strain CFT073 / ATCC 700928 / UPEC).